A 458-amino-acid chain; its full sequence is MEATGTDEVDKLKTKFISAWNNMKYSWVLKTKTYFSRNSPVLLLGKCYHFKYEDEDKTLPAESGCTIEDHVIAGNVEEFRKDFISRIWLTYREEFPQIEGSALTTDCGWGCTLRTGQMLLAQGLILHFLGRAWTWPDALNIENSDSESWTSHTVKKFTASFEASLSGEREFKTPTISLKETIGKYSDDHEMRNEVYHRKIISWFGDSPLALFGLHQLIEYGKKSGKKAGDWYGPAVVAHILRKAVEEARHPDLQGITIYVAQDCTVYNSDVIDKQSASMTSDNADDKAVIILVPVRLGGERTNTDYLEFVKGILSLEYCVGIIGGKPKQSYYFAGFQDDSLIYMDPHYCQSFVDVSIKDFPLETFHCPSPKKMSFRKMDPSCTIGFYCRNVQDFKRASEEITKMLKFSSKEKYPLFTFVNGHSRDYDFTSTTTNEEDLFSEDEKKQLKRFSTEEFVLL.

At Met-1 the chain carries N-acetylmethionine. The active-site Nucleophile is Cys-111. Active-site residues include Asp-345 and His-347. The residue at position 451 (Ser-451) is a Phosphoserine. The residue at position 452 (Thr-452) is a Phosphothreonine.

The protein belongs to the peptidase C54 family.

It is found in the cytoplasm. The enzyme catalyses [protein]-C-terminal L-amino acid-glycyl-phosphatidylethanolamide + H2O = [protein]-C-terminal L-amino acid-glycine + a 1,2-diacyl-sn-glycero-3-phosphoethanolamine. Its activity is regulated as follows. Inhibited by N-ethylmaleimide. In terms of biological role, cysteine protease that plays a key role in autophagy by mediating both proteolytic activation and delipidation of ATG8 family proteins. The protease activity is required for proteolytic activation of ATG8 family proteins: cleaves the C-terminal amino acid of ATG8 proteins MAP1LC3 and GABARAPL2, to reveal a C-terminal glycine. Exposure of the glycine at the C-terminus is essential for ATG8 proteins conjugation to phosphatidylethanolamine (PE) and insertion to membranes, which is necessary for autophagy. In addition to the protease activity, also mediates delipidation of ATG8 family proteins. Catalyzes delipidation of PE-conjugated forms of ATG8 proteins during macroautophagy. Compared to ATG4B, the major protein for proteolytic activation of ATG8 proteins, shows weaker ability to cleave the C-terminal amino acid of ATG8 proteins, while it displays stronger delipidation activity. In contrast to other members of the family, weakly or not involved in phagophore growth during mitophagy. In Homo sapiens (Human), this protein is Cysteine protease ATG4C.